The chain runs to 245 residues: tRNA (guanine-N(1)-)-methyltransferase (245 aa).

S-adenosyl-L-methionine contacts are provided by residues glycine 114 and 133–138 (IGDYVL).

The protein belongs to the RNA methyltransferase TrmD family. As to quaternary structure, homodimer.

It localises to the cytoplasm. The enzyme catalyses guanosine(37) in tRNA + S-adenosyl-L-methionine = N(1)-methylguanosine(37) in tRNA + S-adenosyl-L-homocysteine + H(+). Functionally, specifically methylates guanosine-37 in various tRNAs. This Prochlorococcus marinus (strain MIT 9312) protein is tRNA (guanine-N(1)-)-methyltransferase.